Reading from the N-terminus, the 249-residue chain is Sec-independent protein translocase protein TatC (249 aa).

6 helical membrane passes run 18–38 (VSVG…KNIF), 69–89 (AIVI…APGL), 96–116 (VILP…AFSY), 151–171 (LILG…LAKV), 187–207 (IVVI…SQIF), and 208–228 (MALP…MVNP).

This sequence belongs to the TatC family. As to quaternary structure, the Tat system comprises two distinct complexes: a TatABC complex, containing multiple copies of TatA, TatB and TatC subunits, and a separate TatA complex, containing only TatA subunits. Substrates initially bind to the TatABC complex, which probably triggers association of the separate TatA complex to form the active translocon.

It localises to the cell inner membrane. Its function is as follows. Part of the twin-arginine translocation (Tat) system that transports large folded proteins containing a characteristic twin-arginine motif in their signal peptide across membranes. Together with TatB, TatC is part of a receptor directly interacting with Tat signal peptides. This Helicobacter pylori (strain J99 / ATCC 700824) (Campylobacter pylori J99) protein is Sec-independent protein translocase protein TatC.